Reading from the N-terminus, the 305-residue chain is Dermonecrotic toxin LiSicTox-alphaII1 (305 aa).

The signal sequence occupies residues Met1–Gly18. Positions Ala19–Arg26 are excised as a propeptide. The active site involves His38. 2 residues coordinate Mg(2+): Glu58 and Asp60. The Nucleophile role is filled by His74. Cystine bridges form between Cys78-Cys84 and Cys80-Cys223. Asp118 serves as a coordination point for Mg(2+).

Belongs to the arthropod phospholipase D family. Class II subfamily. Class IIa sub-subfamily. Mg(2+) is required as a cofactor. Expressed by the venom gland.

It is found in the secreted. It catalyses the reaction an N-(acyl)-sphingosylphosphocholine = an N-(acyl)-sphingosyl-1,3-cyclic phosphate + choline. The catalysed reaction is an N-(acyl)-sphingosylphosphoethanolamine = an N-(acyl)-sphingosyl-1,3-cyclic phosphate + ethanolamine. The enzyme catalyses a 1-acyl-sn-glycero-3-phosphocholine = a 1-acyl-sn-glycero-2,3-cyclic phosphate + choline. It carries out the reaction a 1-acyl-sn-glycero-3-phosphoethanolamine = a 1-acyl-sn-glycero-2,3-cyclic phosphate + ethanolamine. In terms of biological role, dermonecrotic toxins cleave the phosphodiester linkage between the phosphate and headgroup of certain phospholipids (sphingolipid and lysolipid substrates), forming an alcohol (often choline) and a cyclic phosphate. This toxin acts on sphingomyelin (SM) wih high activity. It may also act on ceramide phosphoethanolamine (CPE), lysophosphatidylcholine (LPC) and lysophosphatidylethanolamine (LPE), but not on lysophosphatidylserine (LPS), and lysophosphatidylglycerol (LPG). It acts by transphosphatidylation, releasing exclusively cyclic phosphate products as second products. Shows high hemolytic activity. Causes dermonecrosis, induces inflammatory response, platelet aggregation and increases vessel permeability. Shows no lethality when injected at higher dose into mice. May cause complement-dependent hemolysis as well as in a complement-independent manner. The hemolysis provoked in a complement-independent manner may be composed of several steps. The toxin may bind to erythrocyte membranes, may hydrolyze membrane phospholipids (SM and LPC) thus generating metabolism products that may cause hemolysis, probably by provoking an increase of calcium inside cells. The calcium influx may be due to the opening of L-type calcium channels, since L-type calcium channel blockers inhibit calcium influx. The protein is Dermonecrotic toxin LiSicTox-alphaII1 of Loxosceles intermedia (Brown spider).